A 240-amino-acid chain; its full sequence is Thyroid transcription factor 1-associated protein 26 (240 aa).

A disordered region spans residues 104 to 181 (LRKQQRKAGL…QEEYERVQAK (78 aa)). A compositionally biased stretch (low complexity) spans 131 to 149 (TEQTSSEEPPGGHQPQPEE). The segment covering 171–181 (AQEEYERVQAK) has biased composition (basic and acidic residues).

This sequence belongs to the TAP26 family. In terms of assembly, interacts with NKX2-1.

The protein resides in the nucleus. In terms of biological role, component of the transcription complexes of the pulmonary surfactant-associated protein-B (SFTPB) and -C (SFTPC). Enhances homeobox protein Nkx-2.1-activated SFTPB and SFTPC promoter activities. The protein is Thyroid transcription factor 1-associated protein 26 (Ccdc59) of Mus musculus (Mouse).